A 160-amino-acid chain; its full sequence is NADH-quinone oxidoreductase subunit B (160 aa).

Cys37, Cys38, Cys102, and Cys132 together coordinate [4Fe-4S] cluster.

The protein belongs to the complex I 20 kDa subunit family. In terms of assembly, NDH-1 is composed of 14 different subunits. Subunits NuoB, C, D, E, F, and G constitute the peripheral sector of the complex. It depends on [4Fe-4S] cluster as a cofactor.

The protein resides in the cell inner membrane. The enzyme catalyses a quinone + NADH + 5 H(+)(in) = a quinol + NAD(+) + 4 H(+)(out). NDH-1 shuttles electrons from NADH, via FMN and iron-sulfur (Fe-S) centers, to quinones in the respiratory chain. Couples the redox reaction to proton translocation (for every two electrons transferred, four hydrogen ions are translocated across the cytoplasmic membrane), and thus conserves the redox energy in a proton gradient. The sequence is that of NADH-quinone oxidoreductase subunit B from Neisseria gonorrhoeae (strain NCCP11945).